The chain runs to 556 residues: Glucomannan 4-beta-mannosyltransferase 7 (556 aa).

Residues 58–78 (VVVPVFKFLVLLCLVMSVMFF) form a helical membrane-spanning segment. Residue D158 is part of the active site. The substrate site is built by D217 and D219. D311 is an active-site residue. 4 consecutive transmembrane segments (helical) span residues 390-410 (IVAH…TVLF), 426-448 (LITL…WVLF), 502-522 (LLEL…IVYG), and 526-546 (LYVY…GFVG).

Belongs to the glycosyltransferase 2 family. Plant cellulose synthase-like A subfamily. In terms of tissue distribution, ubiquitous.

The protein localises to the golgi apparatus membrane. The enzyme catalyses GDP-mannose + (glucomannan)n = GDP + (glucomannan)n+1.. Its function is as follows. Probable mannan synthase which consists of a 4-beta-mannosyltransferase activity on mannan using GDP-mannose. The beta-1,4-mannan product is the backbone for galactomannan synthesis by galactomannan galactosyltransferase. Galactomannan is a noncellulosic polysaccharides of plant cell wall. Required for synthesis of a cell wall polysaccharide essential for pollen tube growth, for cell wall structure, or for signaling during plant embryo development. The polypeptide is Glucomannan 4-beta-mannosyltransferase 7 (Arabidopsis thaliana (Mouse-ear cress)).